We begin with the raw amino-acid sequence, 373 residues long: MANTTGEPEEVSGALSPPSASAYVKLVLLGLIMCVSLAGNAILSLLVLKERALHKAPYYFLLDLCLADGIRSAVCFPFVLASVRHGSSWTFSALSCKIVAFMAVLFCFHAAFMLFCISVTRYMAIAHHRFYAKRMTLWTCAAVICMAWTLSVAMAFPPVFDVGTYKFIREEDQCIFEHRYFKANDTLGFMLMLAVLMAATHAVYGKLLLFEYRHRKMKPVQMVPAISQNWTFHGPGATGQAAANWIAGFGRGPMPPTLLGIRQNGHAASRRLLGMDEVKGEKQLGRMFYAITLLFLLLWSPYIVACYWRVFVKACAVPHRYLATAVWMSFAQAAVNPIVCFLLNKDLKKCLRTHAPCWGTGGAPAPREPYCVM.

Topologically, residues 1 to 26 (MANTTGEPEEVSGALSPPSASAYVKL) are extracellular. Asn3 carries N-linked (GlcNAc...) asparagine glycosylation. The chain crosses the membrane as a helical span at residues 27-47 (VLLGLIMCVSLAGNAILSLLV). Topologically, residues 48–59 (LKERALHKAPYY) are cytoplasmic. A helical membrane pass occupies residues 60–80 (FLLDLCLADGIRSAVCFPFVL). At 81 to 97 (ASVRHGSSWTFSALSCK) the chain is on the extracellular side. Residues Cys96 and Cys174 are joined by a disulfide bond. Residues 98-118 (IVAFMAVLFCFHAAFMLFCIS) form a helical membrane-spanning segment. The Cytoplasmic segment spans residues 119–139 (VTRYMAIAHHRFYAKRMTLWT). A helical transmembrane segment spans residues 140-160 (CAAVICMAWTLSVAMAFPPVF). Over 161 to 188 (DVGTYKFIREEDQCIFEHRYFKANDTLG) the chain is Extracellular. Asn184 carries N-linked (GlcNAc...) asparagine glycosylation. A helical transmembrane segment spans residues 189 to 209 (FMLMLAVLMAATHAVYGKLLL). The Cytoplasmic segment spans residues 210-287 (FEYRHRKMKP…VKGEKQLGRM (78 aa)). A helical transmembrane segment spans residues 288-308 (FYAITLLFLLLWSPYIVACYW). Over 309–322 (RVFVKACAVPHRYL) the chain is Extracellular. Residues 323–343 (ATAVWMSFAQAAVNPIVCFLL) form a helical membrane-spanning segment. Over 344-373 (NKDLKKCLRTHAPCWGTGGAPAPREPYCVM) the chain is Cytoplasmic.

It belongs to the G-protein coupled receptor 1 family. Expressed in the ovary, specifically in granulosa cells of follicles that have passed the primary stage and in oocytes (at protein level). Expressed at high levels in brain. Lower levels in small intestine. In brain regions, detected in all regions tested. Highest levels in the cerebellum and cerebral cortex.

The protein localises to the cell membrane. Its function is as follows. Is a receptor for the SMIM20 derived peptides Phoenixin-14 and Phoenixin-20. It mediates the Phoenixin-14 and Phoenixin-20 augmentation of gonadotropin-releasing hormone (GNRH) signaling in the hypothalamus and pituitary gland. In the ovary, it mediates the effects of Phoenixin-14 and Phoenixin-20 induced granulosa cell proliferation during follicular growth. This is Probable G-protein coupled receptor 173 (GPR173) from Homo sapiens (Human).